The following is a 177-amino-acid chain: Secretion monitor (177 aa).

An N-terminal signal peptide occupies residues 1–37 (MIGILNRWRQFGRRYFWPHLLLGMVAASLGVPSNLSG).

Belongs to the SecM family.

Its subcellular location is the cytoplasm. It localises to the cytosol. The protein resides in the periplasm. In terms of biological role, regulates secA expression by translational coupling of the secM secA operon. Translational pausing at a specific Pro residue 5 residues before the end of the protein may allow disruption of a mRNA repressor helix that normally suppresses secA translation initiation. This Yersinia pseudotuberculosis serotype O:1b (strain IP 31758) protein is Secretion monitor.